The chain runs to 804 residues: MPQSSPSAAATASDMDKNSGSNSSSASSGSSKGQQPPRSASAGPAGESKPKSDGKNSNGSKRYNRKREPSYPKNENFSNQSRRSNSQKSKTFNKMPPQRGGGSSKPFSSSSNGGRRDEVAEAQRAEFSPAQFSGPKKINLNHLLNFTFEPRGQAGHFEGSGHGGWGKRNKWGHKPFNKELFLQANCQFVVSEDQDYAAHFADPDTLVNWDFVEQVRICSHEVPSCPICLYPPTAAKITRCGHIFCWACILHYLSLSEKTWSKCPICYSSVHKKDLKSVVATESRQYAVGDTITMQLMKREKGVLVALPKSKWVNVDHPINLGDEQLSQYSKLLLASKEQVLHRVVLEEKGALEQQLAEEKHTPESCFIEAAIQEVKIREEALSGVAGGGGEVTGVVAALEHLVLMAPLATESAFQPRKGVLEYLSAFDDEAAQVCSLDPPGPLALPLVEEEEAVSEPEACEDAEVADDSLGEGTVGPEMSQEEPITKPGFTQLSSSPCYYFYQAEDGQHMFLHPVNVRCLVREYGSLEQSPEKISATVVEIAGYSMSEDVRQRHRYLSHLPLTCEFSICELALQPPVVSKETLEMFSDDIEKRKRQRQKKAREERRRERRIEMEENKRQGRYPEVHIPLENLQQFPAFNSYTCPSDSALGPTSTEGHGALSLSPLSRSPGSHADFLLTPLSPTASQGSPSFCVGSLEDDSPFLSFAQMLRVGKAKADGWPKTAPKKDDNSLVPPAPVDSDGESDNSDRVPVPSFQNSFSQAIEAAFMKLDTPATSDPLSEDRGGKKRKRQKQKLLFSTSVVHTK.

3 stretches are compositionally biased toward low complexity: residues 1-31 (MPQSSPSAAATASDMDKNSGSNSSSASSGSS), 78-90 (SNQSRRSNSQKSK), and 104-113 (SKPFSSSSNG). Residues 1-134 (MPQSSPSAAA…AEFSPAQFSG (134 aa)) form a disordered region. Serine 5 is subject to Phosphoserine. At serine 110 the chain carries Phosphoserine. Over residues 114–124 (GRRDEVAEAQR) the composition is skewed to basic and acidic residues. Serine 128 carries the post-translational modification Phosphoserine. The RING-type zinc finger occupies 225 to 267 (CPICLYPPTAAKITRCGHIFCWACILHYLSLSEKTWSKCPICY). 3 disordered regions span residues 589–611 (DIEKRKRQRQKKAREERRRERRI), 646–665 (DSALGPTSTEGHGALSLSPL), and 715–804 (KADG…VHTK). The segment covering 601 to 611 (AREERRRERRI) has biased composition (basic and acidic residues). A compositionally biased stretch (polar residues) spans 646 to 655 (DSALGPTSTE). Over residues 715–729 (KADGWPKTAPKKDDN) the composition is skewed to basic and acidic residues. The segment covering 795–804 (LFSTSVVHTK) has biased composition (polar residues).

The protein belongs to the RNF10 family. In terms of assembly, interacts with MEOX2.

It is found in the cytoplasm. Its subcellular location is the nucleus. It carries out the reaction S-ubiquitinyl-[E2 ubiquitin-conjugating enzyme]-L-cysteine + [acceptor protein]-L-lysine = [E2 ubiquitin-conjugating enzyme]-L-cysteine + N(6)-ubiquitinyl-[acceptor protein]-L-lysine.. It participates in protein modification; protein ubiquitination. Its function is as follows. E3 ubiquitin-protein ligase that catalyzes monoubiquitination of 40S ribosomal proteins RPS2/us5 and RPS3/us3 in response to ribosome stalling. Part of a ribosome quality control that takes place when ribosomes have stalled during translation initiation (iRQC): RNF10 acts by mediating monoubiquitination of RPS2/us5 and RPS3/us3, promoting their degradation by the proteasome. Also promotes ubiquitination of 40S ribosomal proteins in response to ribosome stalling during translation elongation. The action of RNF10 in iRQC is counteracted by USP10. May also act as a transcriptional factor involved in the regulation of MAG (Myelin-associated glycoprotein) expression. Acts as a regulator of Schwann cell differentiation and myelination. The polypeptide is E3 ubiquitin-protein ligase RNF10 (Mus musculus (Mouse)).